The following is a 789-amino-acid chain: SWI5-dependent HO expression protein 4 (789 aa).

Residue Ser18 is modified to Phosphoserine.

The protein resides in the cytoplasm. Its function is as follows. Required for mother cell-specific ho expression. Might be required for the transport of factors (such as ASH1) that promote HO repression from the mother cell into its bud. The chain is SWI5-dependent HO expression protein 4 (SHE4) from Saccharomyces cerevisiae (strain ATCC 204508 / S288c) (Baker's yeast).